Reading from the N-terminus, the 25-residue chain is GLLSSLSSVAKHVLPHVVPVIAEHL.

Position 25 is a leucine amide (leucine 25).

The protein belongs to the frog skin active peptide (FSAP) family. Caerin subfamily. As to expression, expressed by the skin parotoid and/or rostral glands.

The protein localises to the secreted. Functionally, antibacterial peptide, that adopts an alpha helical conformation which can disrupt bacterial membranes. Each caerin displays a different antimicrobial specificity. This chain is Caerin-1.4, found in Ranoidea caerulea (Green tree frog).